A 284-amino-acid chain; its full sequence is Bifunctional protein FolD (284 aa).

Residues 166–168 and I232 each bind NADP(+); that span reads GAS.

This sequence belongs to the tetrahydrofolate dehydrogenase/cyclohydrolase family. Homodimer.

The enzyme catalyses (6R)-5,10-methylene-5,6,7,8-tetrahydrofolate + NADP(+) = (6R)-5,10-methenyltetrahydrofolate + NADPH. It carries out the reaction (6R)-5,10-methenyltetrahydrofolate + H2O = (6R)-10-formyltetrahydrofolate + H(+). It participates in one-carbon metabolism; tetrahydrofolate interconversion. In terms of biological role, catalyzes the oxidation of 5,10-methylenetetrahydrofolate to 5,10-methenyltetrahydrofolate and then the hydrolysis of 5,10-methenyltetrahydrofolate to 10-formyltetrahydrofolate. The protein is Bifunctional protein FolD of Pseudomonas fluorescens (strain Pf0-1).